Consider the following 350-residue polypeptide: Glycolate oxidase subunit GlcE (350 aa).

Residues 1 to 173 (MLRECDYSQA…TEISMKVLPR (173 aa)) form the FAD-binding PCMH-type domain.

As to quaternary structure, the glycolate oxidase likely consists of three subunits, GlcD, GlcE and GlcF. Requires FAD as cofactor.

The protein resides in the cell inner membrane. It carries out the reaction glycolate + A = glyoxylate + AH2. It catalyses the reaction (R)-lactate + A = pyruvate + AH2. Its activity is regulated as follows. In vitro the glycolate oxidase activity is inhibited by the sulfhydryl inhibitors CuSO4 and PCMB, by KCN, but not by the metal complexing agent EDTA. In terms of biological role, component of a complex that catalyzes the oxidation of glycolate to glyoxylate. Is required for E.coli to grow on glycolate as a sole source of carbon. Is also able to oxidize D-lactate ((R)-lactate) with a similar rate. Does not link directly to O(2), and 2,6-dichloroindophenol (DCIP) and phenazine methosulfate (PMS) can act as artificial electron acceptors in vitro, but the physiological molecule that functions as a primary electron acceptor during glycolate oxidation is unknown. This is Glycolate oxidase subunit GlcE from Escherichia coli (strain K12).